We begin with the raw amino-acid sequence, 469 residues long: Tubulin gamma chain (469 aa).

142-148 (AGGTGSG) is a GTP binding site.

This sequence belongs to the tubulin family.

It localises to the cytoplasm. The protein resides in the cytoskeleton. It is found in the microtubule organizing center. The protein localises to the spindle pole body. Tubulin is the major constituent of microtubules. The gamma chain is found at microtubule organizing centers (MTOC) such as the spindle poles or the centrosome, suggesting that it is involved in the minus-end nucleation of microtubule assembly. The protein is Tubulin gamma chain (TUB4) of Microbotryum violaceum (Anther smut fungus).